Here is a 149-residue protein sequence, read N- to C-terminus: Large ribosomal subunit protein bL9 (149 aa).

This sequence belongs to the bacterial ribosomal protein bL9 family.

Functionally, binds to the 23S rRNA. The sequence is that of Large ribosomal subunit protein bL9 from Actinobacillus succinogenes (strain ATCC 55618 / DSM 22257 / CCUG 43843 / 130Z).